The sequence spans 363 residues: 5-formaminoimidazole-4-carboxamide-1-(beta)-D-ribofuranosyl 5'-monophosphate synthetase (363 aa).

The 5-amino-1-(5-phospho-beta-D-ribosyl)imidazole-4-carboxamide site is built by His29 and Ser96. Residues 118–354 (RDILRWEAER…IALEIKNAIK (237 aa)) enclose the ATP-grasp domain. Residues 148-210 (PSEI…CNYC) and Glu232 each bind ATP. Asn260 serves as a coordination point for 5-amino-1-(5-phospho-beta-D-ribosyl)imidazole-4-carboxamide. The Mg(2+) site is built by Gln299 and Glu312.

It belongs to the phosphohexose mutase family. Mg(2+) is required as a cofactor. Mn(2+) serves as cofactor.

The enzyme catalyses 5-amino-1-(5-phospho-beta-D-ribosyl)imidazole-4-carboxamide + formate + ATP = 5-formamido-1-(5-phospho-D-ribosyl)imidazole-4-carboxamide + ADP + phosphate. It participates in purine metabolism; IMP biosynthesis via de novo pathway; 5-formamido-1-(5-phospho-D-ribosyl)imidazole-4-carboxamide from 5-amino-1-(5-phospho-D-ribosyl)imidazole-4-carboxamide (formate route): step 1/1. Functionally, catalyzes the ATP- and formate-dependent formylation of 5-aminoimidazole-4-carboxamide-1-beta-d-ribofuranosyl 5'-monophosphate (AICAR) to 5-formaminoimidazole-4-carboxamide-1-beta-d-ribofuranosyl 5'-monophosphate (FAICAR) in the absence of folates. This is 5-formaminoimidazole-4-carboxamide-1-(beta)-D-ribofuranosyl 5'-monophosphate synthetase from Methanobrevibacter smithii (strain ATCC 35061 / DSM 861 / OCM 144 / PS).